We begin with the raw amino-acid sequence, 189 residues long: Pyridoxal 5'-phosphate synthase subunit PdxT (189 aa).

Residue 48–50 (GES) coordinates L-glutamine. C80 (nucleophile) is an active-site residue. L-glutamine contacts are provided by residues R107 and 136–137 (IR). Residues H172 and E174 each act as charge relay system in the active site.

It belongs to the glutaminase PdxT/SNO family. As to quaternary structure, in the presence of PdxS, forms a dodecamer of heterodimers. Only shows activity in the heterodimer.

It catalyses the reaction aldehydo-D-ribose 5-phosphate + D-glyceraldehyde 3-phosphate + L-glutamine = pyridoxal 5'-phosphate + L-glutamate + phosphate + 3 H2O + H(+). It carries out the reaction L-glutamine + H2O = L-glutamate + NH4(+). The protein operates within cofactor biosynthesis; pyridoxal 5'-phosphate biosynthesis. Functionally, catalyzes the hydrolysis of glutamine to glutamate and ammonia as part of the biosynthesis of pyridoxal 5'-phosphate. The resulting ammonia molecule is channeled to the active site of PdxS. The sequence is that of Pyridoxal 5'-phosphate synthase subunit PdxT from Ruminiclostridium cellulolyticum (strain ATCC 35319 / DSM 5812 / JCM 6584 / H10) (Clostridium cellulolyticum).